The primary structure comprises 160 residues: SsrA-binding protein (160 aa).

The protein belongs to the SmpB family.

The protein localises to the cytoplasm. In terms of biological role, required for rescue of stalled ribosomes mediated by trans-translation. Binds to transfer-messenger RNA (tmRNA), required for stable association of tmRNA with ribosomes. tmRNA and SmpB together mimic tRNA shape, replacing the anticodon stem-loop with SmpB. tmRNA is encoded by the ssrA gene; the 2 termini fold to resemble tRNA(Ala) and it encodes a 'tag peptide', a short internal open reading frame. During trans-translation Ala-aminoacylated tmRNA acts like a tRNA, entering the A-site of stalled ribosomes, displacing the stalled mRNA. The ribosome then switches to translate the ORF on the tmRNA; the nascent peptide is terminated with the 'tag peptide' encoded by the tmRNA and targeted for degradation. The ribosome is freed to recommence translation, which seems to be the essential function of trans-translation. The chain is SsrA-binding protein from Enterobacter sp. (strain 638).